We begin with the raw amino-acid sequence, 578 residues long: Triokinase/FMN cyclase (578 aa).

The 328-residue stretch at S9 to W336 folds into the DhaK domain. Residues G56–H59, K109, and D114 contribute to the dihydroxyacetone site. The active-site Tele-hemiaminal-histidine intermediate is the H221. The 200-residue stretch at K372–E571 folds into the DhaL domain. ATP is bound by residues D401 to C404, S446 to S447, G486, and T494 to M495. Phosphoserine is present on residues S511 and S545. D556–G558 serves as a coordination point for ATP.

This sequence belongs to the dihydroxyacetone kinase (DAK) family. As to quaternary structure, homodimer. Interacts with IFIH1 (via the CARD domains), the interaction is inhibited by viral infection. It depends on Mg(2+) as a cofactor. Mn(2+) is required as a cofactor. Co(2+) serves as cofactor.

It carries out the reaction dihydroxyacetone + ATP = dihydroxyacetone phosphate + ADP + H(+). The catalysed reaction is D-glyceraldehyde + ATP = D-glyceraldehyde 3-phosphate + ADP + H(+). It catalyses the reaction FAD = riboflavin cyclic-4',5'-phosphate + AMP + H(+). Each activity is inhibited by the substrate(s) of the other. Catalyzes both the phosphorylation of dihydroxyacetone and of glyceraldehyde, and the splitting of ribonucleoside diphosphate-X compounds among which FAD is the best substrate. Represses IFIH1-mediated cellular antiviral response. This Mus musculus (Mouse) protein is Triokinase/FMN cyclase.